The primary structure comprises 147 residues: Hemoglobin subunit beta (147 aa).

In terms of domain architecture, Globin spans 3–147; it reads EWTDKERTII…VVSALGKQYH (145 aa). Heme b contacts are provided by histidine 64 and histidine 93.

It belongs to the globin family. Heterotetramer of two alpha chains and two beta chains. In terms of tissue distribution, red blood cells.

Its function is as follows. Involved in oxygen transport from gills to the various peripheral tissues. The protein is Hemoglobin subunit beta of Trematomus newnesi (Dusky notothen).